A 536-amino-acid polypeptide reads, in one-letter code: Nucleosome assembly protein 1-like 3 (536 aa).

Disordered stretches follow at residues 1 to 104 and 160 to 338; these read MAEA…DKLP and PTEE…KEDP. The segment covering 35 to 75 has biased composition (low complexity); sequence SNSSSSTTSCGSTGSSSSSSSSSSSSSSSSSGSSGSSSNGS. Residues 77 to 95 show a composition bias toward basic residues; sequence LHQKKRVPGPSRRAQRRPS. A compositionally biased stretch (acidic residues) spans 160-184; it reads PTEEECEWNSEEEFSGDEEMQDDTP. Composition is skewed to basic and acidic residues over residues 199–220 and 227–269; these read GKENTEVKEEVKDVPEEVPEAK and PKET…KTDS. The span at 287–300 shows a compositional bias: polar residues; it reads TQANAEYTDQPTED. A compositionally biased stretch (basic and acidic residues) spans 306 to 324; that stretch reads PVREAQKRVPETRPEERVN.

This sequence belongs to the nucleosome assembly protein (NAP) family.

Its subcellular location is the nucleus. The polypeptide is Nucleosome assembly protein 1-like 3 (Nap1l3) (Rattus norvegicus (Rat)).